A 99-amino-acid chain; its full sequence is Small ribosomal subunit protein bS18 (99 aa).

Residues 1 to 25 (MAEDHPSVDLDTHLSSPRESEESAP) show a composition bias toward basic and acidic residues. The disordered stretch occupies residues 1–28 (MAEDHPSVDLDTHLSSPRESEESAPKKN).

Belongs to the bacterial ribosomal protein bS18 family. Part of the 30S ribosomal subunit. Forms a tight heterodimer with protein bS6.

In terms of biological role, binds as a heterodimer with protein bS6 to the central domain of the 16S rRNA, where it helps stabilize the platform of the 30S subunit. In Treponema pallidum (strain Nichols), this protein is Small ribosomal subunit protein bS18.